We begin with the raw amino-acid sequence, 78 residues long: Probable [Fe-S]-dependent transcriptional repressor (78 aa).

Cys56, Cys61, Cys64, and Cys70 together coordinate iron-sulfur cluster.

This sequence belongs to the FeoC family.

May function as a transcriptional regulator that controls feoABC expression. The polypeptide is Probable [Fe-S]-dependent transcriptional repressor (Escherichia coli O17:K52:H18 (strain UMN026 / ExPEC)).